We begin with the raw amino-acid sequence, 296 residues long: Mycothiol acetyltransferase (296 aa).

N-acetyltransferase domains follow at residues 1-148 (MTEW…IRVD) and 151-296 (VTVR…YGRA). Glutamate 34 is a binding site for 1D-myo-inositol 2-(L-cysteinylamino)-2-deoxy-alpha-D-glucopyranoside. Acetyl-CoA is bound by residues 79-81 (LVV) and 87-92 (RRGIGS). 1D-myo-inositol 2-(L-cysteinylamino)-2-deoxy-alpha-D-glucopyranoside is bound by residues glutamate 178, lysine 219, and glutamate 229. Acetyl-CoA-binding positions include 233 to 235 (VGV) and 240 to 246 (QGRGLGH). Tyrosine 267 lines the 1D-myo-inositol 2-(L-cysteinylamino)-2-deoxy-alpha-D-glucopyranoside pocket. Position 272 to 277 (272 to 277 (NQAALR)) interacts with acetyl-CoA.

It belongs to the acetyltransferase family. MshD subfamily. Monomer.

The enzyme catalyses 1D-myo-inositol 2-(L-cysteinylamino)-2-deoxy-alpha-D-glucopyranoside + acetyl-CoA = mycothiol + CoA + H(+). Functionally, catalyzes the transfer of acetyl from acetyl-CoA to desacetylmycothiol (Cys-GlcN-Ins) to form mycothiol. The polypeptide is Mycothiol acetyltransferase (Mycobacteroides abscessus (strain ATCC 19977 / DSM 44196 / CCUG 20993 / CIP 104536 / JCM 13569 / NCTC 13031 / TMC 1543 / L948) (Mycobacterium abscessus)).